Consider the following 940-residue polypeptide: Translation initiation factor IF-2 (940 aa).

2 disordered regions span residues 48–264 and 278–351; these read ESFG…VESK and QVAE…TERK. Basic and acidic residues-rich tracts occupy residues 65-95, 112-125, 155-206, 232-258, and 292-301; these read SKPEKVDETPKVETAKVEKAKETQPVVKEEV, FKAEREARAKEQAA, NNER…REAA, RTSEERFRQAQEAKKQPKKPKEIKFEE, and ARPDKKRDFN. Residues 314–332 show a composition bias toward low complexity; it reads NRNSQNQVRNQRTSNWNNN. A tr-type G domain is found at 442–609; sequence ERPPVVTIMG…TVLLVAEIQE (168 aa). Positions 451–458 are G1; sequence GHVDHGKT. 451–458 contacts GTP; sequence GHVDHGKT. Residues 476-480 are G2; that stretch reads GITQH. The tract at residues 497-500 is G3; sequence DTPG. Residues 497–501 and 551–554 each bind GTP; these read DTPGH and NKID. A G4 region spans residues 551–554; the sequence is NKID. Residues 587–589 are G5; it reads SAK.

The protein belongs to the TRAFAC class translation factor GTPase superfamily. Classic translation factor GTPase family. IF-2 subfamily.

It localises to the cytoplasm. Functionally, one of the essential components for the initiation of protein synthesis. Protects formylmethionyl-tRNA from spontaneous hydrolysis and promotes its binding to the 30S ribosomal subunits. Also involved in the hydrolysis of GTP during the formation of the 70S ribosomal complex. The chain is Translation initiation factor IF-2 from Streptococcus suis (strain 98HAH33).